Here is a 378-residue protein sequence, read N- to C-terminus: MGSSEKNGTAYGEYTYAELEREQYWPSEKLRISITGAGGFIGSHIARRLKSEGHYIIASDWKKNEHMTEDMFCHEFHLVDLRVMDNCLKVTNGVDHVFNLAADMGGMGFIQSNHSVIMYNNTMISFNMLEAARINGVKRFFYASSACIYPEFKQLETNVSLKESDAWPAEPQDAYGLEKLATEELCKHYTKDFGIECRVGRFHNIYGPFGTWKGGREKAPAAFCRKAQTSTDRFEMWGDGLQTRSFTFIDECVEGVLRLTKSDFREPVNIGSDEMVSMNEMAEIILSFEDRELPIHHIPGPEGVRGRNSDNTLIKEKLGWAPTMKLKDGLRFTYFWIKEQIEKEKTQGVDIAGYGSSKVVSTQAPVQLGSLRAADGKE.

Residues 36-62 (GAGGFIGSHIARRLKSEGHYIIASDWK), Asp-60, and Asp-80 contribute to the NAD(+) site. Substrate-binding positions include Gly-105 and 145 to 147 (SAC). Residues Tyr-175 and Lys-179 each contribute to the NAD(+) site. Residue Tyr-175 is the Proton acceptor of the active site. Substrate contacts are provided by residues Asn-204, 217–219 (EKA), Lys-226, 242–244 (QTR), Arg-307, and Ser-357.

The protein belongs to the NAD(P)-dependent epimerase/dehydratase family. Homodimer. The cofactor is NAD(+).

It catalyses the reaction GDP-alpha-D-mannose = GDP-beta-L-gulose. The catalysed reaction is GDP-beta-L-gulose = GDP-beta-L-galactose. The protein operates within cofactor biosynthesis; L-ascorbate biosynthesis via GDP-alpha-D-mannose pathway; L-ascorbate from GDP-alpha-D-mannose: step 1/5. Its activity is regulated as follows. Strongly activated by NAD. Activated by NADP. Slightly activated by NADH and NADPH. Inhibited by GDP. In terms of biological role, catalyzes a reversible epimerization of GDP-D-mannose that precedes the committed step in the biosynthesis of vitamin C (L-ascorbate), resulting in the hydrolysis of the highly energetic glycosyl-pyrophosphoryl linkage. Able to catalyze 2 distinct epimerization reactions and can release both GDP-L-galactose and GDP-L-gulose from GDP-mannose. The polypeptide is GDP-mannose 3,5-epimerase 1 (GME-1) (Oryza sativa subsp. japonica (Rice)).